The primary structure comprises 390 residues: MYVAGVMSGTSLDGIDVALVHIDGSGVDSKVELIHFTTVPFCNDMKNDIQQALSIENSNVQLICSLNFKLGLRFANAVKEVCKEANFPLRQLDLIGSHGQTIYHQPQQDGGMIPSTLQIGEPAIIAYETNTTVISNFRTMDMAAGGQGAPLVPYSEIILYRHQTKNRLLQNIGGIGNVTVIPSQLSEKSVIAFDTGPGNMVMDEVCQRLFQLSYDQNGNIAKQGVVVEEVLTYCMNHPFLKMNPPKSTGREQFGEAFVTGLLNRFKKHSKENILATVTMFTACSIVHHYKAFILPYYEIDEVILGGGGSYNNTLVEMLRNGLREEKCSICIQEDIGHSSAAKEAIAFAILANETYHRNPSNVPSATGAKNSVILGNITFPPYADENEANI.

9–16 serves as a coordination point for ATP; that stretch reads GTSLDGID.

The protein belongs to the anhydro-N-acetylmuramic acid kinase family.

It catalyses the reaction 1,6-anhydro-N-acetyl-beta-muramate + ATP + H2O = N-acetyl-D-muramate 6-phosphate + ADP + H(+). The protein operates within amino-sugar metabolism; 1,6-anhydro-N-acetylmuramate degradation. Its pathway is cell wall biogenesis; peptidoglycan recycling. Functionally, catalyzes the specific phosphorylation of 1,6-anhydro-N-acetylmuramic acid (anhMurNAc) with the simultaneous cleavage of the 1,6-anhydro ring, generating MurNAc-6-P. Is required for the utilization of anhMurNAc either imported from the medium or derived from its own cell wall murein, and thus plays a role in cell wall recycling. This chain is Anhydro-N-acetylmuramic acid kinase, found in Bacillus cereus (strain B4264).